The chain runs to 321 residues: Probable ATP-dependent 6-phosphofructokinase (321 aa).

Residues glycine 20 and 82–83 (RF) contribute to the ATP site. Substrate contacts are provided by residues 136–138 (TID), 180–182 (MGR), glutamate 235, arginine 259, and 265–268 (YLQR). Aspartate 138 functions as the Proton acceptor in the catalytic mechanism.

Belongs to the phosphofructokinase type A (PFKA) family. Homotetramer. The cofactor is Mg(2+).

The protein localises to the cytoplasm. It carries out the reaction beta-D-fructose 6-phosphate + ATP = beta-D-fructose 1,6-bisphosphate + ADP + H(+). It functions in the pathway carbohydrate degradation; glycolysis; D-glyceraldehyde 3-phosphate and glycerone phosphate from D-glucose: step 3/4. Catalyzes the phosphorylation of D-fructose 6-phosphate to fructose 1,6-bisphosphate by ATP, the first committing step of glycolysis. The protein is Probable ATP-dependent 6-phosphofructokinase (pfkA) of Ureaplasma parvum serovar 3 (strain ATCC 700970).